A 236-amino-acid chain; its full sequence is Three prime repair exonuclease 2 (236 aa).

Mg(2+)-binding residues include Asp-14 and Glu-16. Residues 16 to 17 and Tyr-122 contribute to the substrate site; that span reads EA. His-188 functions as the Proton donor/acceptor in the catalytic mechanism. Position 193 (Asp-193) interacts with Mg(2+). Substrate is bound at residue Asp-193.

This sequence belongs to the exonuclease superfamily. TREX family. Homodimer. It depends on Mg(2+) as a cofactor.

The protein resides in the nucleus. It carries out the reaction Exonucleolytic cleavage in the 3'- to 5'-direction to yield nucleoside 5'-phosphates.. In terms of biological role, exonuclease with a preference for double-stranded DNA with mismatched 3' termini. May play a role in DNA repair. This chain is Three prime repair exonuclease 2 (Trex2), found in Mus musculus (Mouse).